The primary structure comprises 220 residues: Probable nicotinate-nucleotide adenylyltransferase (220 aa).

Belongs to the NadD family.

The enzyme catalyses nicotinate beta-D-ribonucleotide + ATP + H(+) = deamido-NAD(+) + diphosphate. The protein operates within cofactor biosynthesis; NAD(+) biosynthesis; deamido-NAD(+) from nicotinate D-ribonucleotide: step 1/1. Its function is as follows. Catalyzes the reversible adenylation of nicotinate mononucleotide (NaMN) to nicotinic acid adenine dinucleotide (NaAD). This chain is Probable nicotinate-nucleotide adenylyltransferase, found in Laribacter hongkongensis (strain HLHK9).